Reading from the N-terminus, the 249-residue chain is Tumor necrosis factor receptor superfamily member 13B (249 aa).

At 1-128 (MAMAFCPKDQ…LSSDQLTLYC (128 aa)) the chain is on the extracellular side. TNFR-Cys repeat units follow at residues 5-38 (FCPK…TDFC) and 42-76 (NCRK…AHFC). Intrachain disulfides connect Cys-6/Cys-19, Cys-22/Cys-34, Cys-26/Cys-38, Cys-43/Cys-58, Cys-61/Cys-72, and Cys-65/Cys-76. Positions 86–116 (LQPELGRPQAGEVEVRSDNSGRHQGSEHGPG) are disordered. Residues 98–111 (VEVRSDNSGRHQGS) are compositionally biased toward basic and acidic residues. A helical; Signal-anchor for type III membrane protein membrane pass occupies residues 129–149 (TLGVCLCAIFCCFLVALASFL). Residues 150 to 249 (RRRGEPLPSQ…ASTGDARPAT (100 aa)) are Cytoplasmic-facing. The interval 156-176 (LPSQPAGPRGSQANSPHAHRP) is disordered.

Binds TRAF2, TRAF5 and TRAF6. Binds the NH2-terminal domain of CAMLG with its C-terminus.

It localises to the membrane. Receptor for TNFSF13/APRIL and TNFSF13B/TALL1/BAFF/BLYS that binds both ligands with similar high affinity. Mediates calcineurin-dependent activation of NF-AT, as well as activation of NF-kappa-B and AP-1. Involved in the stimulation of B- and T-cell function and the regulation of humoral immunity. This Mus musculus (Mouse) protein is Tumor necrosis factor receptor superfamily member 13B (Tnfrsf13b).